Reading from the N-terminus, the 769-residue chain is TSC22 domain family protein 2 (769 aa).

Disordered stretches follow at residues 20 to 86, 224 to 292, 334 to 353, and 520 to 563; these read AQVA…TVSP, HGLD…PQPM, AQPG…YPQP, and VPAP…SLPQ. The segment covering 28-37 has biased composition (acidic residues); the sequence is EDTESLDDPD. Residues 229–252 are compositionally biased toward polar residues; that stretch reads GTDSSLTAVSQLPPSEKMSQPTLA. The span at 269–279 shows a compositional bias: low complexity; sequence GGAVAPSSASL. The span at 531–541 shows a compositional bias: low complexity; it reads SSHTPVSRSSS. Residues 542–563 are compositionally biased toward polar residues; the sequence is VIQQVGSPLAQGTHSAPTSLPQ. Residues 691–725 adopt a coiled-coil conformation; the sequence is MYAVREEVEVLKEQIKELVERNSLLERENALLKSL. The span at 726–745 shows a compositional bias: polar residues; the sequence is SNNDQLSQLPAQQANPGSTS. The tract at residues 726–769 is disordered; it reads SNNDQLSQLPAQQANPGSTSQQQAMIAQPPQPTQPPQQPNVSSA. The span at 754–763 shows a compositional bias: pro residues; sequence PPQPTQPPQQ.

The protein belongs to the TSC-22/Dip/Bun family. As to quaternary structure, interacts with NRBP1. Interacts with PKM isoform M2; the interaction results in reduced nuclear levels of PKM isoform M2, leading to repression of cyclin CCND1 transcription and reduced cell growth. Interacts with WDR77. As to expression, expressed in the cortex, medulla and papilla of the kidney. Expressed in the kidney.

Functionally, reduces the level of nuclear PKM isoform M2 which results in repression of cyclin CCND1 transcription and reduced cell growth. In terms of biological role, may protect kidney cells from hyperosmotic stress. This Mus musculus (Mouse) protein is TSC22 domain family protein 2.